A 431-amino-acid polypeptide reads, in one-letter code: Adenylosuccinate lyase (431 aa).

N(6)-(1,2-dicarboxyethyl)-AMP-binding positions include 4–5, 67–69, and 93–94; these read RY, RHD, and TS. The active-site Proton donor/acceptor is the His-141. A N(6)-(1,2-dicarboxyethyl)-AMP-binding site is contributed by Gln-212. Ser-262 acts as the Proton donor/acceptor in catalysis. Residues Ser-263, 268–270, Asn-276, and 307–311 contribute to the N(6)-(1,2-dicarboxyethyl)-AMP site; these read KRN and SAERI.

This sequence belongs to the lyase 1 family. Adenylosuccinate lyase subfamily. As to quaternary structure, homodimer and homotetramer. Residues from neighboring subunits contribute catalytic and substrate-binding residues to each active site.

It carries out the reaction N(6)-(1,2-dicarboxyethyl)-AMP = fumarate + AMP. The catalysed reaction is (2S)-2-[5-amino-1-(5-phospho-beta-D-ribosyl)imidazole-4-carboxamido]succinate = 5-amino-1-(5-phospho-beta-D-ribosyl)imidazole-4-carboxamide + fumarate. Its pathway is purine metabolism; AMP biosynthesis via de novo pathway; AMP from IMP: step 2/2. It functions in the pathway purine metabolism; IMP biosynthesis via de novo pathway; 5-amino-1-(5-phospho-D-ribosyl)imidazole-4-carboxamide from 5-amino-1-(5-phospho-D-ribosyl)imidazole-4-carboxylate: step 2/2. In terms of biological role, catalyzes two reactions in de novo purine nucleotide biosynthesis. Catalyzes the breakdown of 5-aminoimidazole- (N-succinylocarboxamide) ribotide (SAICAR or 2-[5-amino-1-(5-phospho-beta-D-ribosyl)imidazole-4-carboxamido]succinate) to 5-aminoimidazole-4-carboxamide ribotide (AICAR or 5-amino-1-(5-phospho-beta-D-ribosyl)imidazole-4-carboxamide) and fumarate, and of adenylosuccinate (ADS or N(6)-(1,2-dicarboxyethyl)-AMP) to adenosine monophosphate (AMP) and fumarate. In Staphylococcus aureus (strain USA300), this protein is Adenylosuccinate lyase (purB).